The primary structure comprises 208 residues: Thymidylate kinase (208 aa).

10-17 (GPEGSGKT) contacts ATP.

This sequence belongs to the thymidylate kinase family.

It carries out the reaction dTMP + ATP = dTDP + ADP. Functionally, phosphorylation of dTMP to form dTDP in both de novo and salvage pathways of dTTP synthesis. The chain is Thymidylate kinase from Bacillus cereus (strain 03BB102).